The chain runs to 288 residues: Small ribosomal subunit protein uS3 (288 aa).

Residues 38–106 (IRRMMSKGLE…QVQLNIIEVK (69 aa)) form the KH type-2 domain. Residues 209 to 288 (PGRETPAEAP…TQPAETQQEG (80 aa)) form a disordered region. Residues 219 to 232 (SRPRRERGDRSERP) are compositionally biased toward basic and acidic residues. Low complexity predominate over residues 249–264 (AGRAAATTIAQAAETP). Residues 277-288 (AATQPAETQQEG) show a composition bias toward polar residues.

It belongs to the universal ribosomal protein uS3 family. Part of the 30S ribosomal subunit. Forms a tight complex with proteins S10 and S14.

Its function is as follows. Binds the lower part of the 30S subunit head. Binds mRNA in the 70S ribosome, positioning it for translation. This Salinispora arenicola (strain CNS-205) protein is Small ribosomal subunit protein uS3.